A 478-amino-acid chain; its full sequence is Methionine aminopeptidase 2 (478 aa).

Residues 1–123 form a disordered region; it reads MAGVEEASSF…DPPSVPICDL (123 aa). At Ala-2 the chain carries N-acetylalanine. Residues 36 to 46 show a composition bias toward basic residues; sequence KKKRRKKKKGK. Positions 55-79 are enriched in basic and acidic residues; sequence ELDKESGTSVDEVAKQLERQALEEK. 2 positions are modified to phosphoserine; alternate: Ser-60 and Ser-63. 2 O-linked (GlcNAc) serine; alternate glycosylation sites follow: Ser-60 and Ser-63. Positions 80–92 are enriched in acidic residues; the sequence is EKDDDDEDGDGDG. Positions 97-109 are enriched in basic residues; sequence GKKKKKKKKKRGP. Residue His-231 coordinates substrate. A divalent metal cation contacts are provided by Asp-251, Asp-262, and His-331. Position 339 (His-339) interacts with substrate. Residues Glu-364 and Glu-459 each coordinate a divalent metal cation.

The protein belongs to the peptidase M24A family. Methionine aminopeptidase eukaryotic type 2 subfamily. Binds EIF2S1 at low magnesium concentrations. Interacts strongly with the eIF-2 gamma-subunit EIF2S3. It depends on Co(2+) as a cofactor. Requires Zn(2+) as cofactor. The cofactor is Mn(2+). Fe(2+) is required as a cofactor. In terms of processing, O-glycosylated; contains 12 O-linked GlcNAc. Post-translationally, contains approximately 12 O-linked N-acetylglucosamine (GlcNAc) residues. O-glycosylation is required for EIF2S1 binding.

Its subcellular location is the cytoplasm. It carries out the reaction Release of N-terminal amino acids, preferentially methionine, from peptides and arylamides.. Its function is as follows. Cotranslationally removes the N-terminal methionine from nascent proteins. The N-terminal methionine is often cleaved when the second residue in the primary sequence is small and uncharged (Met-Ala-, Cys, Gly, Pro, Ser, Thr, or Val). Functionally, protects eukaryotic initiation factor EIF2S1 from translation-inhibiting phosphorylation by inhibitory kinases such as EIF2AK2/PKR and EIF2AK1/HCR. Plays a critical role in the regulation of protein synthesis. The polypeptide is Methionine aminopeptidase 2 (Metap2) (Rattus norvegicus (Rat)).